The following is a 119-amino-acid chain: Small ribosomal subunit protein uS13m (119 aa).

Belongs to the universal ribosomal protein uS13 family. In terms of assembly, component of the mitochondrial small ribosomal subunit (mt-SSU). Mature N.crassa 74S mitochondrial ribosomes consist of a small (37S) and a large (54S) subunit. The 37S small subunit contains a 16S ribosomal RNA (16S mt-rRNA) and 32 different proteins. The 54S large subunit contains a 23S rRNA (23S mt-rRNA) and 42 different proteins.

It is found in the mitochondrion. In terms of biological role, component of the mitochondrial ribosome (mitoribosome), a dedicated translation machinery responsible for the synthesis of mitochondrial genome-encoded proteins, including at least some of the essential transmembrane subunits of the mitochondrial respiratory chain. The mitoribosomes are attached to the mitochondrial inner membrane and translation products are cotranslationally integrated into the membrane. This chain is Small ribosomal subunit protein uS13m (sws2), found in Neurospora crassa (strain ATCC 24698 / 74-OR23-1A / CBS 708.71 / DSM 1257 / FGSC 987).